An 89-amino-acid polypeptide reads, in one-letter code: Small ribosomal subunit protein uS15 (89 aa).

It belongs to the universal ribosomal protein uS15 family. In terms of assembly, part of the 30S ribosomal subunit. Forms a bridge to the 50S subunit in the 70S ribosome, contacting the 23S rRNA.

Functionally, one of the primary rRNA binding proteins, it binds directly to 16S rRNA where it helps nucleate assembly of the platform of the 30S subunit by binding and bridging several RNA helices of the 16S rRNA. In terms of biological role, forms an intersubunit bridge (bridge B4) with the 23S rRNA of the 50S subunit in the ribosome. This is Small ribosomal subunit protein uS15 from Zymomonas mobilis subsp. mobilis (strain ATCC 31821 / ZM4 / CP4).